The primary structure comprises 160 residues: uncharacterized protein (160 aa).

Residues 69–145 are a coiled coil; sequence NQLLNMMAQA…EQREHVKEQR (77 aa). 2 disordered regions span residues 82–109 and 129–160; these read GVRL…LKNA and KKKQ…HRGK. Over residues 86–99 the composition is skewed to basic residues; the sequence is QGRRQKKINPKRLQ. Positions 133 to 146 are enriched in basic and acidic residues; that stretch reads IMKEQREHVKEQRY. Residues 147-160 show a composition bias toward basic residues; the sequence is MLKKQKAKKKHRGK.

This is an uncharacterized protein from Bacillus subtilis (strain 168).